Here is a 657-residue protein sequence, read N- to C-terminus: Glycogen debranching enzyme (657 aa).

Aspartate 336 acts as the Nucleophile in catalysis. Glutamate 371 functions as the Proton donor in the catalytic mechanism. The disordered stretch occupies residues 460-479 (ANGEENRDGTNNNYSNNHGK).

It belongs to the glycosyl hydrolase 13 family.

It carries out the reaction Hydrolysis of (1-&gt;6)-alpha-D-glucosidic linkages to branches with degrees of polymerization of three or four glucose residues in limit dextrin.. It functions in the pathway glycan degradation; glycogen degradation. In terms of biological role, removes maltotriose and maltotetraose chains that are attached by 1,6-alpha-linkage to the limit dextrin main chain, generating a debranched limit dextrin. In Escherichia coli O127:H6 (strain E2348/69 / EPEC), this protein is Glycogen debranching enzyme.